Reading from the N-terminus, the 152-residue chain is UPF0756 membrane protein CA_C0092 (152 aa).

The next 4 helical transmembrane spans lie at I5 to S25, M50 to V70, F82 to L102, and L117 to I137.

It belongs to the UPF0756 family.

It localises to the cell membrane. The polypeptide is UPF0756 membrane protein CA_C0092 (Clostridium acetobutylicum (strain ATCC 824 / DSM 792 / JCM 1419 / IAM 19013 / LMG 5710 / NBRC 13948 / NRRL B-527 / VKM B-1787 / 2291 / W)).